Reading from the N-terminus, the 243-residue chain is Tyrosine-protein phosphatase CpsB (243 aa).

It belongs to the metallo-dependent hydrolases superfamily. CpsB/CapC family. Mn(2+) is required as a cofactor.

It catalyses the reaction O-phospho-L-tyrosyl-[protein] + H2O = L-tyrosyl-[protein] + phosphate. It functions in the pathway capsule biogenesis; capsule polysaccharide biosynthesis. Its function is as follows. Dephosphorylates CpsD. Involved in the regulation of capsular polysaccharide biosynthesis. The chain is Tyrosine-protein phosphatase CpsB (cpsB) from Streptococcus pneumoniae serotype 4 (strain ATCC BAA-334 / TIGR4).